A 565-amino-acid chain; its full sequence is MELEYESKRPLYIPYAGPILLEFPLLNKGSAFTEEERADFNLAGLLPEAVETIEEQAERAWRQYQEFKHDIEKHVYLRNIQDTNETLFYRLLDGHLNEMMPIIYTPTVGEACEHFSDIYRRARGLFISYPNRANIDDMLQNATKQNVKVIVVTDGERILGLGDQGIGGMGIPIGKLALYTACGGISPAYTLPVVLDVGTNNPQRLNDPLYMGWRHPRITDDEYYAFVDEFIQAVKRRWPNVLLQFEDFAQKNATPLLNRYRDEICSFNDDIQGTAAVAIGSLIAASRAAGTQLRDQTVAFLGAGSAGCGIAEQIIAQMKSEGLSEEEARARVFMVDRFGLLTDKLPNLLDFQSKLVQKSELLADWDCNSDAISLLEVVRNAKPTIMIGVSGQPGLFTEEIIREMYKHCARPIVMPLSNPTSRVEARPEDIIRWTEGSALVATGSPFSPVHYQDKVFPIAQCNNSYIFPGIGLGVLASGANRITDGMLMAASRALADCSPLANNGEGALLPDLSDIQQVSKRIALDVGKAAQLQGVAVVTSADALQKAIDHNFWQPQYRSYKRTSF.

The active-site Proton donor is Tyr104. Residue Arg157 participates in NAD(+) binding. Residue Lys175 is the Proton acceptor of the active site. A divalent metal cation contacts are provided by Glu246, Asp247, and Asp270. Positions 270 and 418 each coordinate NAD(+).

This sequence belongs to the malic enzymes family. Homotetramer. Mg(2+) is required as a cofactor. The cofactor is Mn(2+).

It catalyses the reaction (S)-malate + NAD(+) = pyruvate + CO2 + NADH. The enzyme catalyses oxaloacetate + H(+) = pyruvate + CO2. The sequence is that of NAD-dependent malic enzyme from Pectobacterium atrosepticum (strain SCRI 1043 / ATCC BAA-672) (Erwinia carotovora subsp. atroseptica).